Consider the following 59-residue polypeptide: UPF0434 protein Rsph17025_2896 (59 aa).

The protein belongs to the UPF0434 family.

This is UPF0434 protein Rsph17025_2896 from Cereibacter sphaeroides (strain ATCC 17025 / ATH 2.4.3) (Rhodobacter sphaeroides).